Consider the following 387-residue polypeptide: Zn(2)-C6 fungal-type trascription factor aoiH (387 aa).

The segment at residues 21–48 (CDFCALSKVKCDRGQPQCVRCIKSGIDC) is a DNA-binding region (zn(2)-C6 fungal-type). Polar residues predominate over residues 68–87 (VRSTSATTQGTRRKQQTIAQ). A disordered region spans residues 68 to 94 (VRSTSATTQGTRRKQQTIAQHSPRRRI).

Its subcellular location is the nucleus. Functionally, transcription factor; part of the gene cluster that mediates the biosynthesis of a methylated derivative of known natural products orthosporin and diaporthin. Positively regultaes the expression of the non-reducing polyketide synthase aoiG and the O-methyltransferase aoiO. The chain is Zn(2)-C6 fungal-type trascription factor aoiH from Aspergillus oryzae (strain ATCC 42149 / RIB 40) (Yellow koji mold).